A 654-amino-acid chain; its full sequence is Beta-galactosidase-1-like protein (654 aa).

An N-terminal signal peptide occupies residues 1–27 (MAPKKPSCLRSLLLPLSLTLLLPQADT). Residue Asn97 is glycosylated (N-linked (GlcNAc...) asparagine). The Proton donor role is filled by Glu186. An N-linked (GlcNAc...) asparagine glycan is attached at Asn243. The Nucleophile role is filled by Glu264.

It belongs to the glycosyl hydrolase 35 family.

The protein resides in the secreted. Probable glycosyl hydrolase. The chain is Beta-galactosidase-1-like protein (GLB1L) from Macaca fascicularis (Crab-eating macaque).